The chain runs to 91 residues: UPF0250 protein NMA1380 (91 aa).

The protein belongs to the UPF0250 family.

In Neisseria meningitidis serogroup A / serotype 4A (strain DSM 15465 / Z2491), this protein is UPF0250 protein NMA1380.